Consider the following 444-residue polypeptide: Probable D-serine dehydratase (444 aa).

Lysine 118 is modified (N6-(pyridoxal phosphate)lysine).

The protein belongs to the serine/threonine dehydratase family. DsdA subfamily. It depends on pyridoxal 5'-phosphate as a cofactor.

It catalyses the reaction D-serine = pyruvate + NH4(+). This is Probable D-serine dehydratase from Acinetobacter baumannii (strain ATCC 17978 / DSM 105126 / CIP 53.77 / LMG 1025 / NCDC KC755 / 5377).